A 797-amino-acid polypeptide reads, in one-letter code: Leucine-rich repeat-containing protein AAC1 (797 aa).

Positions 1–12 (MKRTSNRNEEAT) are enriched in basic and acidic residues. Disordered regions lie at residues 1 to 20 (MKRT…SSTT), 51 to 103 (YSLF…TTTT), 125 to 148 (NLPT…TTTT), and 307 to 333 (HSTS…TITA). Polar residues predominate over residues 55–81 (NEPNNDNDTNSSTRPNKQQKLLKSNES). The span at 82-103 (TTSTTTTTTPITTTTTTTTTTT) shows a compositional bias: low complexity. Positions 313-326 (SSPPPPPPPPPPQI) are enriched in pro residues. LRR repeat units follow at residues 376 to 397 (KLKK…DFFS), 406 to 425 (TLET…QLLS), 435 to 456 (VLKR…YLNK), 464 to 484 (QLET…IMMK), 492 to 513 (SLKE…DFGK), 514 to 535 (SITS…KGLS), 543 to 564 (SITS…KSLS), 572 to 593 (TLKF…DHLV), 601 to 622 (SIHS…TLSQ), and 633 to 653 (PFKY…KKLI).

This is Leucine-rich repeat-containing protein AAC1 (AAC1) from Dictyostelium discoideum (Social amoeba).